Consider the following 168-residue polypeptide: Vitelline membrane protein Vm26Ab (168 aa).

The signal sequence occupies residues 1-23 (MAFNFGHLLIAGLVALSAVSSET). Residues 24-42 (IQLQPTQGILIPAPLAENI) constitute a propeptide, removed between stage 11 and 14 of oogenesis. Residues 43–46 (RVSR) are essential for N-terminal propeptide removal. Potential serine protease cleavage site. Residues 52-119 (YGAAPAAPSY…PAYSAPASIP (68 aa)) are 8 X 8 AA approximate repeats of P-[AS]-Y-S-A-P-A-[AS]. A 1; half-length repeat occupies 55–58 (APAA). Residues 59–66 (PSYSAPAA) form repeat 2. One copy of the 3; approximate repeat lies at 70 to 77 (QAYSAPAA). 5 tandem repeats follow at residues 78–85 (PAYSAPAA), 86–93 (PAYSAPAA), 94–101 (PAYSAPAA), 102–109 (PAYSAPAA), and 110–117 (PAYSAPAS). Residues 117 to 154 (SIPSPPCPKNYLFSCQPSLQPVPCSAPAQSYGSAGAYS) enclose the VM domain. A propeptide spans 155 to 168 (QYVPQYAVPFVREL) (removed between stage 9 and 12 of oogenesis).

Belongs to the vitelline membrane protein family. As to quaternary structure, interacts with vml and Vm26Aa; forms part of a disulfide-linked network within the vitelline membrane of stage 10 egg chambers. Proteolytically processed after secretion into the perivitelline space. Undergoes several proteolytic processing steps during formation of the vitelline membrane; an initial processing step removing a C-terminal propeptide occurs between stage 9 and 12 of oogenesis while a second removing a N-terminal propeptide occurs between stage 11 and 14. In terms of processing, becomes part of a disulfide-linked network including other vitelline membrane proteins, including vml and Vm26Aa, during vitelline membrane biogenesis and maturation. Cys-123, Cys-131 and Cys-140 are involved in disulfide network formation, with Cys-131 being the most important. Undergoes both disulfide and non-disulfide cross-linking upon incorporation into the vitelline membrane. Follicle cells.

The protein localises to the secreted. It is found in the extracellular space. The protein resides in the extracellular matrix. In terms of biological role, major early eggshell protein secreted by follicle cells into the perivitelline space and incorporated into the vitelline membrane. Involved in vitelline membrane biogenesis; forms a cross-linked network with other vitelline membrane components. The sequence is that of Vitelline membrane protein Vm26Ab from Drosophila melanogaster (Fruit fly).